Consider the following 504-residue polypeptide: Transcription factor NDT80 (504 aa).

3 disordered regions span residues 64–172 (MHFN…QHHM), 283–310 (NGFP…NQHA), and 477–504 (RGRS…TPPQ). Composition is skewed to low complexity over residues 73–87 (QQQQ…QQQQ), 103–145 (QGPT…ARQP), 153–172 (QQAQ…QHHM), and 292–301 (HPQNQPQNHP). The segment at residues 160–488 (QADAQSQAQQ…RSPSSYHKDR (329 aa)) is a DNA-binding region (NDT80).

Its subcellular location is the nucleus. Meiosis-specific transcription factor that binds to the middle sporulation element (MSE) of targeted genes corresponding to the consensus sequence 5'-ACACAAA-3'. Acts as an activator of CDR1 induction by antifungal drugs. Modulates azole sensitivity by controlling the expression of ergosterol biosynthesis genes. Required for hyphal growth in response to different filament-inducing cues and for the proper expression of genes characterizing the filamentous transcriptional program including noteworthy genes encoding cell wall components, such as HWP1, ECE1, RBT4, and ALS3. Is essential for the completion of cell separation through the direct transcriptional regulation of genes encoding the chitinase CHT3 and the cell wall glucosidase SUN41. Required for biofilm formation and plays a key role in microcolony formation under both flow and static conditions and to epithelial surfaces. Essential for virulence. The chain is Transcription factor NDT80 from Candida albicans (strain SC5314 / ATCC MYA-2876) (Yeast).